Here is a 489-residue protein sequence, read N- to C-terminus: Putative ATP-dependent RNA helicase T26G10.1 (489 aa).

The short motif at 44-72 (KSFAELGVSQPLCDACQRLGWMKPSKIQQ) is the Q motif element. The Helicase ATP-binding domain occupies 75 to 246 (LPHALQGKDV…RASLRDPARV (172 aa)). Position 88–95 (88–95 (AETGSGKT)) interacts with ATP. Positions 194–197 (DEAD) match the DEAD box motif. The 161-residue stretch at 257–417 (NLKQHYIFVP…EYKCVENEVM (161 aa)) folds into the Helicase C-terminal domain. The segment at 433–489 (EMKEMDEKKKSGKKRRQNDDFGDTEESGGRFKMGIKSMGGRGGSGGGRGGKKKKMSK) is disordered. Residues 469 to 480 (SMGGRGGSGGGR) show a composition bias toward gly residues.

The protein belongs to the DEAD box helicase family. DDX47/RRP3 subfamily.

It is found in the nucleus. The catalysed reaction is ATP + H2O = ADP + phosphate + H(+). In terms of biological role, probable ATP-dependent RNA helicase which may be involved in ribosome biogenesis. The chain is Putative ATP-dependent RNA helicase T26G10.1 from Caenorhabditis elegans.